The following is an 88-amino-acid chain: Large ribosomal subunit protein bL27 (88 aa).

Residues 1–21 (MAHKKAGGSSRNGRDSDGRRL) are disordered.

Belongs to the bacterial ribosomal protein bL27 family.

The sequence is that of Large ribosomal subunit protein bL27 from Methylobacterium nodulans (strain LMG 21967 / CNCM I-2342 / ORS 2060).